The primary structure comprises 385 residues: Flap endonuclease 1 (385 aa).

The N-domain stretch occupies residues 1–105 (MGIKGLNAII…HELSKRSARR (105 aa)). Asp34 provides a ligand contact to Mg(2+). DNA-binding residues include Arg47 and Arg71. Asp87, Glu156, Glu158, Asp177, and Asp179 together coordinate Mg(2+). The I-domain stretch occupies residues 120–251 (EKLKHERRLV…VTALKLIKEH (132 aa)). Glu156 contributes to the DNA binding site. Residues Gly229 and Asp231 each coordinate DNA. Residue Asp231 participates in Mg(2+) binding. Positions 338-346 (VQGRLDGFF) are interaction with PCNA. The segment covering 356–370 (LAAANAKAKSTKAGK) has biased composition (low complexity). The interval 356–385 (LAAANAKAKSTKAGKQATKGKVGKPGRPRK) is disordered. Residues 376 to 385 (KVGKPGRPRK) are compositionally biased toward basic residues.

The protein belongs to the XPG/RAD2 endonuclease family. FEN1 subfamily. Interacts with PCNA. Three molecules of FEN1 bind to one PCNA trimer with each molecule binding to one PCNA monomer. PCNA stimulates the nuclease activity without altering cleavage specificity. Mg(2+) is required as a cofactor. Phosphorylated. Phosphorylation upon DNA damage induces relocalization to the nuclear plasma.

The protein resides in the nucleus. It localises to the nucleolus. The protein localises to the nucleoplasm. It is found in the mitochondrion. Functionally, structure-specific nuclease with 5'-flap endonuclease and 5'-3' exonuclease activities involved in DNA replication and repair. During DNA replication, cleaves the 5'-overhanging flap structure that is generated by displacement synthesis when DNA polymerase encounters the 5'-end of a downstream Okazaki fragment. It enters the flap from the 5'-end and then tracks to cleave the flap base, leaving a nick for ligation. Also involved in the long patch base excision repair (LP-BER) pathway, by cleaving within the apurinic/apyrimidinic (AP) site-terminated flap. Acts as a genome stabilization factor that prevents flaps from equilibrating into structures that lead to duplications and deletions. Also possesses 5'-3' exonuclease activity on nicked or gapped double-stranded DNA, and exhibits RNase H activity. Also involved in replication and repair of rDNA and in repairing mitochondrial DNA. The chain is Flap endonuclease 1 from Lachancea thermotolerans (strain ATCC 56472 / CBS 6340 / NRRL Y-8284) (Yeast).